The primary structure comprises 256 residues: 4-hydroxy-tetrahydrodipicolinate reductase (256 aa).

NAD(+)-binding positions include 12 to 17 (GINGRV), Asp39, 86 to 88 (GTT), and 110 to 113 (AANY). The active-site Proton donor/acceptor is the His144. His145 contributes to the (S)-2,3,4,5-tetrahydrodipicolinate binding site. The Proton donor role is filled by Lys148. 154-155 (GT) provides a ligand contact to (S)-2,3,4,5-tetrahydrodipicolinate.

The protein belongs to the DapB family.

The protein resides in the cytoplasm. The enzyme catalyses (S)-2,3,4,5-tetrahydrodipicolinate + NAD(+) + H2O = (2S,4S)-4-hydroxy-2,3,4,5-tetrahydrodipicolinate + NADH + H(+). It carries out the reaction (S)-2,3,4,5-tetrahydrodipicolinate + NADP(+) + H2O = (2S,4S)-4-hydroxy-2,3,4,5-tetrahydrodipicolinate + NADPH + H(+). Its pathway is amino-acid biosynthesis; L-lysine biosynthesis via DAP pathway; (S)-tetrahydrodipicolinate from L-aspartate: step 4/4. Functionally, catalyzes the conversion of 4-hydroxy-tetrahydrodipicolinate (HTPA) to tetrahydrodipicolinate. The protein is 4-hydroxy-tetrahydrodipicolinate reductase of Gluconacetobacter diazotrophicus (strain ATCC 49037 / DSM 5601 / CCUG 37298 / CIP 103539 / LMG 7603 / PAl5).